The primary structure comprises 378 residues: 3-dehydroquinate synthase (378 aa).

Residues 115–119 (GVVGD), 139–140 (TS), K152, and K161 each bind NAD(+). Residues E194, H256, and H275 each contribute to the Zn(2+) site.

Belongs to the sugar phosphate cyclases superfamily. Dehydroquinate synthase family. Requires Co(2+) as cofactor. Zn(2+) is required as a cofactor. The cofactor is NAD(+).

Its subcellular location is the cytoplasm. It carries out the reaction 7-phospho-2-dehydro-3-deoxy-D-arabino-heptonate = 3-dehydroquinate + phosphate. Its pathway is metabolic intermediate biosynthesis; chorismate biosynthesis; chorismate from D-erythrose 4-phosphate and phosphoenolpyruvate: step 2/7. In terms of biological role, catalyzes the conversion of 3-deoxy-D-arabino-heptulosonate 7-phosphate (DAHP) to dehydroquinate (DHQ). This chain is 3-dehydroquinate synthase, found in Brucella suis (strain ATCC 23445 / NCTC 10510).